The following is a 315-amino-acid chain: MTTVVKHFLRDDDLTPAQQAEVLELAARLKKAPFAERPLEGPRGVGVIFEKNSTRTRFSFEMGIAQLGGHAIVVDGRSTQLGREETLQDTGRVLSRYVDAVVWRTFGQKRLEAMASGADVPIVNALSDEFHPCQVLADLQTLVERKGSLKGLKLTYLGDGANNMAHSLMLGGVTAGVDVTIASPEGFAPLPWVVEAARARAAETGATITLTGDPQTAVVGADALVTDTWTSMGQENDGLDRVGPFRPFQINEALLAKADADAVVLHCLPAHRGEEITDEVLDGPQSVVWDEAENRLHAQKALLVWLLAQRTGDRP.

Carbamoyl phosphate-binding positions include 53-56, Q80, R104, and 131-134; these read STRT and HPCQ. L-ornithine-binding positions include N163, D227, and 231–232; that span reads SM. Carbamoyl phosphate is bound by residues 267–268 and R295; that span reads CL.

It belongs to the aspartate/ornithine carbamoyltransferase superfamily. OTCase family.

It is found in the cytoplasm. The enzyme catalyses carbamoyl phosphate + L-ornithine = L-citrulline + phosphate + H(+). Its pathway is amino-acid biosynthesis; L-arginine biosynthesis; L-arginine from L-ornithine and carbamoyl phosphate: step 1/3. Functionally, reversibly catalyzes the transfer of the carbamoyl group from carbamoyl phosphate (CP) to the N(epsilon) atom of ornithine (ORN) to produce L-citrulline. The chain is Ornithine carbamoyltransferase from Rhodococcus jostii (strain RHA1).